Here is a 557-residue protein sequence, read N- to C-terminus: Hepatocyte nuclear factor 1-beta (557 aa).

The tract at residues 1–31 (MVSKLTSLQQELLSALLSSGVTKEVLVQALE) is dimerization. One can recognise an HNF-p1 domain in the interval 1–32 (MVSKLTSLQQELLSALLSSGVTKEVLVQALEE). Ser-49, Ser-52, Ser-75, and Ser-80 each carry phosphoserine. The segment at 64 to 85 (TLTNGHAKGRLSGDEGSEDGDD) is disordered. In terms of domain architecture, POU-specific atypical spans 93–188 (KELQALNTEE…ILRQFNQTVQ (96 aa)). The segment at residues 231-311 (MRRNRFKWGP…NRRKEEAFRQ (81 aa)) is a DNA-binding region (homeobox; HNF1-type). The disordered stretch occupies residues 324 to 370 (HSLNPLLSHGSPHHQPSSSPPNKLSGVRYSQQGNNEVTSSSTISHHG). Residues 328–344 (PLLSHGSPHHQPSSSPP) show a composition bias toward low complexity. A compositionally biased stretch (polar residues) spans 351-370 (RYSQQGNNEVTSSSTISHHG).

It belongs to the HNF1 homeobox family. As to quaternary structure, binds DNA as a dimer. Can form homodimer or heterodimer with HNF1-alpha. Interacts (via HNF-p1 domain) with PCBD1; the interaction increases its transactivation activity.

Its subcellular location is the nucleus. Functionally, transcription factor that binds to the inverted palindrome 5'-GTTAATNATTAAC-3'. Binds to the FPC element in the cAMP regulatory unit of the PLAU gene. Transcriptional activity is increased by coactivator PCBD1. The sequence is that of Hepatocyte nuclear factor 1-beta (HNF1B) from Pongo abelii (Sumatran orangutan).